Reading from the N-terminus, the 982-residue chain is MRVAFIYRWLLCGAAIVNVLVAQRHTASDNPSTYNIGGVLSNSDSEEHFRTTIAHLNFDQQYVPRKVTYYDKTIRMDKNPIKTVFNVCDKLIEKRVYAVVVSHEQTSGDLSPAAVSYTSGFYSIPVIGISSRDAAFSDKNIHVSFLRTVPPYYHQADVWLEMLSHFLYTKVIIIHSSDTDGRAILGRFQTTSQTYYDDVDVRATVELIVEFEPKLESFTEHLIDMKTAQSRVYLMYASTEDAQVIFRDAGEYNMTGEGHVWIVTEQALHANNTPDGVLGLQLEHAHSDKGHIRDSVYVLASAIKEMISNETIAEAPKDCGDSAVNWESGKRLFQYLKSRNITGETGQVAFDDNGDRIYAGYDVINIREHQKQHVVGKFSYDSPRGKMRMRINDSEIIWGGKQKRKPEGIMIPTHLKLLTIEEKPFVYVRRMGDDEFRCEPDERPCPLFNASGATANEFCCRGYCIDLLIELSKRINFTYDLALSPDGQFGHYILRNNSGAMTLRKEWTGLIGELVNERADMIVAPLTINPERAEYIEFSKPFKYQGITILEKKPSRSSTLVSFLQPFSNTLWILVMVSVHVVALVLYLLDRFSPFGRFKLSHSDSNEEKALNLSSAVWFAWGVLLNSGIGEGTPRSFSARVLGMVWAGFAMIIVASYTANLAAFLVLERPKTKLSGINDARLRNTMENLTCATVKGSSVDMYFRRQVELSNMYRTMESNNYVTAEQAIQDVKKGKLMAFIWDSSRLEYEASKDCELVTAGELFGRSGYGIGLQKGSPWTDAVTLAILEFHESGFMEKLDKQWIFHGHVQQNCELFEKTPNTLGLKNMAGVFILVGVGIAGGVGLIIIEVIYKKHQVKKQKRLDIARHAADKWRGTIEKRKTIRASLAMQRQYNVGLMATHAPGTISLAVDKRRYPRLGQRLGPERAWPGDGADVLRIRRPYDLGKGGLTASQLGLGKTRPQQNPLPPRYSPGYTSDVSHLVV.

The N-terminal stretch at M1–A22 is a signal peptide. Topologically, residues Q23–S568 are extracellular. Residues N253, N309, N340, N392, N449, N476, and N496 are each glycosylated (N-linked (GlcNAc...) asparagine). Glycine contacts are provided by residues P525–T527 and R532. The helical transmembrane segment at N569 to L589 threads the bilayer. Residues D590 to W646 lie on the Cytoplasmic side of the membrane. A helical membrane pass occupies residues A647 to L667. Topologically, residues E668 to N826 are extracellular. N688 carries an N-linked (GlcNAc...) asparagine glycan. S698 and D742 together coordinate glycine. The helical transmembrane segment at M827–I847 threads the bilayer. Residues E848–V982 are Cytoplasmic-facing. The tract at residues L948–V982 is disordered. The segment covering G972–V982 has biased composition (polar residues).

Belongs to the glutamate-gated ion channel (TC 1.A.10.1) family. Forms a heteromeric NMDA channel with Nmdar2.

Its subcellular location is the cell membrane. The protein localises to the postsynaptic cell membrane. The protein resides in the postsynaptic density. In terms of biological role, NMDA receptor subtype of glutamate-gated ion channels with high calcium permeability and voltage-dependent sensitivity to magnesium. Mediated by glycine. This protein plays a key role in synaptic plasticity, synaptogenesis, excitotoxicity, memory acquisition and learning. It mediates neuronal functions in glutamate neurotransmission. Is involved in the cell surface targeting of NMDA receptors. Plays a role in associative learning and in long-term memory consolidation. This Drosophila grimshawi (Hawaiian fruit fly) protein is Glutamate [NMDA] receptor subunit 1.